The following is a 229-amino-acid chain: MSDSQEIPYHNQLKNRFRGYFPVIIDVETAGFDAKKDALLELAAITLKMDENGYLHPDQKCHFHIKPFEGANINPESLKFNGIDIHNPLRGAVSELDAITGLFQMVRRGQKDADCQRSIIVAHNATFDQSFVMAAAERTGVKRNPFHPFGMFDTASLAGLMFGQTVLVKACQAAKIPFDGKQAHSALYDTERTAKLFCYMVNHLKDLGGFPHIASELEQEKTTEKETAL.

The Exonuclease domain occupies 23-197 (VIIDVETAGF…YDTERTAKLF (175 aa)). Positions 26, 28, 184, and 189 each coordinate Mg(2+). The Proton donor/acceptor role is filled by histidine 184.

The protein belongs to the RNase T family. As to quaternary structure, homodimer. Requires Mg(2+) as cofactor.

Functionally, trims short 3' overhangs of a variety of RNA species, leaving a one or two nucleotide 3' overhang. Responsible for the end-turnover of tRNA: specifically removes the terminal AMP residue from uncharged tRNA (tRNA-C-C-A). Also appears to be involved in tRNA biosynthesis. The polypeptide is Ribonuclease T (Haemophilus influenzae (strain 86-028NP)).